A 406-amino-acid polypeptide reads, in one-letter code: Argininosuccinate synthase (406 aa).

Residues 11-19 (AYSGGLDTS) and Ala-38 each bind ATP. The L-citrulline site is built by Tyr-91 and Ser-96. ATP is bound at residue Gly-121. Residues Thr-123, Asn-127, and Asp-128 each contribute to the L-aspartate site. Asn-127 is an L-citrulline binding site. Positions 131, 181, 190, 266, and 278 each coordinate L-citrulline.

This sequence belongs to the argininosuccinate synthase family. Type 1 subfamily. In terms of assembly, homotetramer.

Its subcellular location is the cytoplasm. The catalysed reaction is L-citrulline + L-aspartate + ATP = 2-(N(omega)-L-arginino)succinate + AMP + diphosphate + H(+). The protein operates within amino-acid biosynthesis; L-arginine biosynthesis; L-arginine from L-ornithine and carbamoyl phosphate: step 2/3. This Campylobacter jejuni subsp. jejuni serotype O:2 (strain ATCC 700819 / NCTC 11168) protein is Argininosuccinate synthase.